Consider the following 326-residue polypeptide: L-lactate dehydrogenase (326 aa).

NAD(+) is bound by residues V26, D47, K52, Y78, and 92-93 (GA). Positions 95 and 101 each coordinate substrate. NAD(+) is bound by residues T114, 131-133 (ASN), and S156. 133–136 (NPVD) contributes to the substrate binding site. Substrate is bound at residue 161-164 (DTAR). Positions 166 and 181 each coordinate beta-D-fructose 1,6-bisphosphate. The active-site Proton acceptor is the H188. Y233 is subject to Phosphotyrosine. T242 contacts substrate.

Belongs to the LDH/MDH superfamily. LDH family. Homotetramer.

The protein localises to the cytoplasm. It carries out the reaction (S)-lactate + NAD(+) = pyruvate + NADH + H(+). It participates in fermentation; pyruvate fermentation to lactate; (S)-lactate from pyruvate: step 1/1. Allosterically activated by fructose 1,6-bisphosphate (FBP). Functionally, catalyzes the conversion of lactate to pyruvate. This is L-lactate dehydrogenase from Corynebacterium jeikeium (strain K411).